Reading from the N-terminus, the 186-residue chain is dTTP/UTP pyrophosphatase (186 aa).

Asp-70 serves as the catalytic Proton acceptor.

It belongs to the Maf family. YhdE subfamily. The cofactor is a divalent metal cation.

The protein localises to the cytoplasm. The catalysed reaction is dTTP + H2O = dTMP + diphosphate + H(+). It catalyses the reaction UTP + H2O = UMP + diphosphate + H(+). In terms of biological role, nucleoside triphosphate pyrophosphatase that hydrolyzes dTTP and UTP. May have a dual role in cell division arrest and in preventing the incorporation of modified nucleotides into cellular nucleic acids. The chain is dTTP/UTP pyrophosphatase from Vibrio vulnificus (strain CMCP6).